Consider the following 932-residue polypeptide: LPS-assembly protein LptD (932 aa).

A signal peptide spans 1–33 (MALKSPAFRRKFPLLVTGGLLALQPLATSYAVA). A disordered region spans residues 54 to 87 (PVNNLPPRPVHEGAAVSSGTEAASEGETADRPML).

It belongs to the LptD family. Component of the lipopolysaccharide transport and assembly complex. Interacts with LptE and LptA.

It is found in the cell outer membrane. Functionally, together with LptE, is involved in the assembly of lipopolysaccharide (LPS) at the surface of the outer membrane. This chain is LPS-assembly protein LptD, found in Pseudomonas putida (strain GB-1).